Here is a 102-residue protein sequence, read N- to C-terminus: Secreted RxLR effector protein 61 (102 aa).

Residues M1–A22 form the signal peptide. Residues R51–R60 carry the RxLR-dEER motif.

This sequence belongs to the RxLR effector family.

Its subcellular location is the secreted. It localises to the host chloroplast envelope. The protein resides in the host cytoplasm. It is found in the host nucleus. Its function is as follows. Effector that partially suppresses the tobacco programmed cell death induced by cell death-inducing proteins. This is Secreted RxLR effector protein 61 from Plasmopara viticola (Downy mildew of grapevine).